Reading from the N-terminus, the 222-residue chain is Ribonuclease S-3 (222 aa).

The N-terminal stretch at 1 to 22 (MVHVVMMVFLLIVLILCSSTVG) is a signal peptide. Gln31 provides a ligand contact to RNA. A disulfide bridge links Cys37 with Cys44. Asn40 is a glycosylation site (N-linked (GlcNAc...) asparagine). Residues His55, 92-93 (NV), Phe102, 105-106 (KE), and 109-110 (KH) contribute to the RNA site. Residue His55 is the Proton donor of the active site. Cys70 and Cys113 are joined by a disulfide. Residues Glu106 and Lys109 contribute to the active site. Residue His110 is the Proton acceptor of the active site. The N-linked (GlcNAc...) asparagine glycan is linked to Asn138. Disulfide bonds link Cys177–Cys215 and Cys192–Cys203.

It belongs to the RNase T2 family. Post-translationally, N-linked core structure at Asn-138 contains xylose.

The enzyme catalyses a ribonucleotidyl-ribonucleotide-RNA + H2O = a 3'-end 3'-phospho-ribonucleotide-RNA + a 5'-end dephospho-ribonucleoside-RNA + H(+). Functionally, self-incompatibility (SI) is the inherited ability of a flowering plant to prevent self-fertilization by discriminating between self and non-self pollen during pollination. In many species, self-incompatibility is controlled by the single, multiallelic locus S. This Pyrus pyrifolia (Chinese pear) protein is Ribonuclease S-3.